The sequence spans 334 residues: Phosphate acyltransferase (334 aa).

It belongs to the PlsX family. As to quaternary structure, homodimer. Probably interacts with PlsY.

It localises to the cytoplasm. It catalyses the reaction a fatty acyl-[ACP] + phosphate = an acyl phosphate + holo-[ACP]. It participates in lipid metabolism; phospholipid metabolism. Functionally, catalyzes the reversible formation of acyl-phosphate (acyl-PO(4)) from acyl-[acyl-carrier-protein] (acyl-ACP). This enzyme utilizes acyl-ACP as fatty acyl donor, but not acyl-CoA. The chain is Phosphate acyltransferase from Caldicellulosiruptor bescii (strain ATCC BAA-1888 / DSM 6725 / KCTC 15123 / Z-1320) (Anaerocellum thermophilum).